A 67-amino-acid chain; its full sequence is Phycobilisome 7.8 kDa linker polypeptide, allophycocyanin-associated, core (67 aa).

Positions 1 to 56 (MRMFRITACVPSQTRIRTQRELQNTYFTKLVPYDNSFREQQRIMKMGGKIVKVELA) constitute a CpcD-like domain.

It belongs to the phycobilisome linker protein family.

The protein resides in the cellular thylakoid membrane. Its function is as follows. Rod linker protein, associated with allophycocyanin. Linker polypeptides determine the state of aggregation and the location of the disk-shaped phycobiliprotein units within the phycobilisome and modulate their spectroscopic properties in order to mediate a directed and optimal energy transfer. The protein is Phycobilisome 7.8 kDa linker polypeptide, allophycocyanin-associated, core (apcC) of Synechocystis sp. (strain ATCC 27184 / PCC 6803 / Kazusa).